The sequence spans 490 residues: MAQRAVWLISHEPGTPLCGTVRFSRRYPTVEKRARVFNGASYVPIPEDGPFLKALLFELRLLDDDKDFVESRDSCSRINKTSIYGLLIGGEELWPVVAFLKNDIIYACVPLVEQTLSPRPPLISVSGVSQGFEFLFGIQDFLYSGQKNDSELNTKLSQLPDLLLQACPFGTLLDANLKNSLDNTNFASVTQPQKQPAWKTGTYKGKPQVSISITEKVKSMQYDKQGIADTWQVVGTVTCKCDLEGIMPNVTISLNLPTNGSPLQDILVHPCVTSLDSAILTSSSIDAMDDSAFSGPYKFPLTPPLESFNLCYYTSQVPVPPILGFYQLKEEEVQLRITINLKLHESVKNNFEFCEAHIPFYNRGPITHLEYKTSFGQLEVFREKSLLIWIIGQKFPKSMEISLSGTVTFGAKSHEKQPFDPICIGETAYLKLHFRILDYTLTGCYADQHSVQVFASGKPKISAYRKLISSDYYIWNSKAPAPVTYGSLLL.

One can recognise an MHD domain in the interval 206–476 (KPQVSISITE…LISSDYYIWN (271 aa)).

It belongs to the adaptor complexes medium subunit family. Probably part of the adaptor protein complex 5 (AP-5) a tetramer composed of AP5B1, AP5M1, AP5S1 and AP5Z1.

It localises to the cytoplasm. The protein resides in the cytosol. Its subcellular location is the late endosome membrane. The protein localises to the lysosome membrane. Its function is as follows. As part of AP-5, a probable fifth adaptor protein complex it may be involved in endosomal transport. The protein is AP-5 complex subunit mu-1 (AP5M1) of Macaca fascicularis (Crab-eating macaque).